Here is a 304-residue protein sequence, read N- to C-terminus: uncharacterized protein (304 aa).

The span at 1-10 shows a compositional bias: basic residues; that stretch reads MLWAHRKKRK. Residues 1 to 28 are disordered; that stretch reads MLWAHRKKRKAATETTEDKPLESHRAND. The span at 16–27 shows a compositional bias: basic and acidic residues; the sequence is TEDKPLESHRAN. Position 39 is a phosphoserine (Ser39). Residues 91-101 are compositionally biased toward polar residues; sequence KQKISGSSMTK. Disordered stretches follow at residues 91–115, 138–160, and 190–304; these read KQKI…SMED, SMLQ…ISPE, and SHTV…IYGS. Residues 151–160 show a composition bias toward basic and acidic residues; the sequence is HAESRNISPE. Residue Ser158 is modified to Phosphoserine. Residues 195–206 show a composition bias toward low complexity; it reads SQSRHSNQSHHS. Residues 208-223 show a composition bias toward polar residues; the sequence is PSHQSNQSHPVYSSYQ. Low complexity predominate over residues 229-248; it reads HLSPQSYPSYSSHQSHPGHS. The segment covering 249–263 has biased composition (polar residues); it reads NHQGHSGLSSHQTHL. Residues 264 to 292 are compositionally biased toward low complexity; that stretch reads GHSNHQGHPGHSSHQSHQGQPGHPSHQSH.

This is an uncharacterized protein from Mus musculus (Mouse).